The sequence spans 170 residues: Ecotin (170 aa).

Positions 1–21 (MNKASVVFSGLLMAVSASAIA) are cleaved as a signal peptide. Cys-78 and Cys-115 form a disulfide bridge.

This sequence belongs to the protease inhibitor I11 (ecotin) family. In terms of assembly, homodimer.

It is found in the periplasm. Its function is as follows. General inhibitor of pancreatic serine proteases: inhibits chymotrypsin, trypsin, elastases, factor X, kallikrein as well as a variety of other proteases. The polypeptide is Ecotin (Serratia proteamaculans (strain 568)).